A 370-amino-acid chain; its full sequence is DNA replication and repair protein RecF (370 aa).

30–37 (GENAQGKT) contributes to the ATP binding site.

This sequence belongs to the RecF family.

The protein resides in the cytoplasm. Functionally, the RecF protein is involved in DNA metabolism; it is required for DNA replication and normal SOS inducibility. RecF binds preferentially to single-stranded, linear DNA. It also seems to bind ATP. In Staphylococcus carnosus (strain TM300), this protein is DNA replication and repair protein RecF.